A 194-amino-acid polypeptide reads, in one-letter code: dCTP deaminase (194 aa).

Residues 110 to 115 (RSSLAR), Asp128, 136 to 138 (VLE), Tyr171, Lys178, and Gln182 contribute to the dCTP site. Glu138 (proton donor/acceptor) is an active-site residue. Residues 172–194 (NKRKSAKYRDQQEAVASRISQDK) form a disordered region.

It belongs to the dCTP deaminase family. As to quaternary structure, homotrimer.

It catalyses the reaction dCTP + H2O + H(+) = dUTP + NH4(+). Its pathway is pyrimidine metabolism; dUMP biosynthesis; dUMP from dCTP (dUTP route): step 1/2. Functionally, catalyzes the deamination of dCTP to dUTP. This Shewanella loihica (strain ATCC BAA-1088 / PV-4) protein is dCTP deaminase.